The sequence spans 343 residues: MAEYDHYEDDGFLNSFNDSSQEEHQDFLQFRKVFLPCMYLVVFVCGLVGNSLVLVISIFYHKLQSLTDVFLVNLPLADLVFVCTLPFWAYAGIHEWIFGQVMCKTLLGVYTINFYTSMLILTCITVDRFIVVVKATKAYNQQAKRMTWGKVICLLIWVISLLVSLPQIIYGNVFNLDKLICGYHDEEISTVVLATQMTLGFFLPLLAMIVCYSVIIKTLLHAGGFQKHRSLKIIFLVMAVFLLTQTPFNLVKLIRSTHWEYYAMTSFHYTIIVTEAIAYLRACLNPVLYAFVSLKFRKNFWKLVKDIGCLPYLGVSHQWKSSEDNSKTFSASHNVEATSMFQL.

Topologically, residues 1–33 (MAEYDHYEDDGFLNSFNDSSQEEHQDFLQFRKV) are extracellular. N-linked (GlcNAc...) asparagine glycosylation occurs at N17. The chain crosses the membrane as a helical span at residues 34–60 (FLPCMYLVVFVCGLVGNSLVLVISIFY). The Cytoplasmic segment spans residues 61–69 (HKLQSLTDV). The helical transmembrane segment at 70–90 (FLVNLPLADLVFVCTLPFWAY) threads the bilayer. Residues 91-104 (AGIHEWIFGQVMCK) are Extracellular-facing. The cysteines at positions 103 and 181 are disulfide-linked. Residues 105–126 (TLLGVYTINFYTSMLILTCITV) traverse the membrane as a helical segment. Residues 127–144 (DRFIVVVKATKAYNQQAK) are Cytoplasmic-facing. A helical transmembrane segment spans residues 145 to 165 (RMTWGKVICLLIWVISLLVSL). The Extracellular portion of the chain corresponds to 166–188 (PQIIYGNVFNLDKLICGYHDEEI). The chain crosses the membrane as a helical span at residues 189–216 (STVVLATQMTLGFFLPLLAMIVCYSVII). The Cytoplasmic segment spans residues 217 to 232 (KTLLHAGGFQKHRSLK). Residues 233–260 (IIFLVMAVFLLTQTPFNLVKLIRSTHWE) traverse the membrane as a helical segment. The Extracellular segment spans residues 261 to 276 (YYAMTSFHYTIIVTEA). A helical transmembrane segment spans residues 277 to 294 (IAYLRACLNPVLYAFVSL). At 295 to 343 (KFRKNFWKLVKDIGCLPYLGVSHQWKSSEDNSKTFSASHNVEATSMFQL) the chain is on the cytoplasmic side.

Belongs to the G-protein coupled receptor 1 family.

The protein resides in the cell membrane. Receptor for the C-X-C chemokine CXCL16. Used as a coreceptor by SIVs and by strains of HIV-2 and m-tropic HIV-1. The protein is C-X-C chemokine receptor type 6 (CXCR6) of Macaca mulatta (Rhesus macaque).